The sequence spans 106 residues: uncharacterized protein (106 aa).

2 disordered regions span residues 27 to 47 (FSDS…DVSD) and 83 to 106 (SPAM…VQSK). Positions 29–39 (DSEDEPDDEAS) are enriched in acidic residues. Over residues 94-106 (GIEREDRGGVQSK) the composition is skewed to basic and acidic residues.

The protein localises to the mitochondrion. This is an uncharacterized protein from Arabidopsis thaliana (Mouse-ear cress).